The sequence spans 506 residues: UDP-N-acetylmuramoylalanine--D-glutamate ligase (506 aa).

Residue G128 to T134 coordinates ATP.

It belongs to the MurCDEF family.

The protein localises to the cytoplasm. It catalyses the reaction UDP-N-acetyl-alpha-D-muramoyl-L-alanine + D-glutamate + ATP = UDP-N-acetyl-alpha-D-muramoyl-L-alanyl-D-glutamate + ADP + phosphate + H(+). The protein operates within cell wall biogenesis; peptidoglycan biosynthesis. Functionally, cell wall formation. Catalyzes the addition of glutamate to the nucleotide precursor UDP-N-acetylmuramoyl-L-alanine (UMA). This Albidiferax ferrireducens (strain ATCC BAA-621 / DSM 15236 / T118) (Rhodoferax ferrireducens) protein is UDP-N-acetylmuramoylalanine--D-glutamate ligase.